A 427-amino-acid chain; its full sequence is MAP kinase-interacting serine/threonine-protein kinase 1 (427 aa).

Basic and acidic residues predominate over residues M1 to I11. The segment at M1–T37 is disordered. At T34 the chain carries Phosphothreonine; by PAK2. The residue at position 39 (S39) is a Phosphoserine; by PAK2. Residues Q49–V333 enclose the Protein kinase domain. ATP-binding positions include L55–V63 and K78. D170 serves as the catalytic Proton acceptor. 2 positions are modified to phosphoserine: S180 and S185. Residues T209, T214, and T344 each carry the phosphothreonine modification. The interval R407–L427 is disordered.

This sequence belongs to the protein kinase superfamily. CAMK Ser/Thr protein kinase family. Interacts with the C-terminal regions of EIF4G1 and EIF4G2. Also binds to dephosphorylated ERK1 and ERK2, and to the p38 kinases. The cofactor is Mg(2+). In terms of processing, dual phosphorylation of Thr-209 and Thr-214 activates the kinase. Phosphorylation of Thr-344 activates the kinase. MAPK3/ERK1 is one of the kinases which activate MKNK1/MNK1. Phosphorylation by PAK2 leads to a reduced phosphorylation of EIF4G1. In terms of tissue distribution, ubiquitously expressed in all tissues examined, with high levels in skeletal muscle.

It carries out the reaction L-seryl-[protein] + ATP = O-phospho-L-seryl-[protein] + ADP + H(+). The enzyme catalyses L-threonyl-[protein] + ATP = O-phospho-L-threonyl-[protein] + ADP + H(+). Phosphorylated and activated by the p38 kinases and kinases in the Erk pathway. In terms of biological role, may play a role in the response to environmental stress and cytokines. Appears to regulate translation by phosphorylating EIF4E, thus increasing the affinity of this protein for the 7-methylguanosine-containing mRNA cap. The protein is MAP kinase-interacting serine/threonine-protein kinase 1 (Mknk1) of Mus musculus (Mouse).